The following is a 346-amino-acid chain: Probable RNA methyltransferase Pmen_2155 (346 aa).

Glu91 (proton acceptor) is an active-site residue. The region spanning Leu94–Asp320 is the Radical SAM core domain. Cysteines 101 and 325 form a disulfide. [4Fe-4S] cluster is bound by residues Cys108, Cys112, and Cys115. Residues Gly153–Glu154, Ser183, Ser206–His208, and Asn282 each bind S-adenosyl-L-methionine. Catalysis depends on Cys325, which acts as the S-methylcysteine intermediate.

It belongs to the radical SAM superfamily. RlmN family. The cofactor is [4Fe-4S] cluster.

The protein localises to the cytoplasm. The polypeptide is Probable RNA methyltransferase Pmen_2155 (Ectopseudomonas mendocina (strain ymp) (Pseudomonas mendocina)).